The primary structure comprises 630 residues: Arginine--tRNA ligase (630 aa).

The short motif at 120–130 is the 'HIGH' region element; sequence ANPIHPLHIGH.

The protein belongs to the class-I aminoacyl-tRNA synthetase family.

Its subcellular location is the cytoplasm. The enzyme catalyses tRNA(Arg) + L-arginine + ATP = L-arginyl-tRNA(Arg) + AMP + diphosphate. The polypeptide is Arginine--tRNA ligase (Pyrobaculum arsenaticum (strain DSM 13514 / JCM 11321 / PZ6)).